The following is a 248-amino-acid chain: Triosephosphate isomerase (248 aa).

9 to 11 provides a ligand contact to substrate; sequence NWK. The active-site Electrophile is H94. E166 serves as the catalytic Proton acceptor. Substrate-binding positions include G172, S211, and 232-233; that span reads GG.

It belongs to the triosephosphate isomerase family. Homodimer.

The protein resides in the cytoplasm. The enzyme catalyses D-glyceraldehyde 3-phosphate = dihydroxyacetone phosphate. It participates in carbohydrate biosynthesis; gluconeogenesis. The protein operates within carbohydrate degradation; glycolysis; D-glyceraldehyde 3-phosphate from glycerone phosphate: step 1/1. Involved in the gluconeogenesis. Catalyzes stereospecifically the conversion of dihydroxyacetone phosphate (DHAP) to D-glyceraldehyde-3-phosphate (G3P). The chain is Triosephosphate isomerase from Ruthia magnifica subsp. Calyptogena magnifica.